Consider the following 178-residue polypeptide: Large ribosomal subunit protein uL6 (178 aa).

The protein belongs to the universal ribosomal protein uL6 family. As to quaternary structure, part of the 50S ribosomal subunit.

Functionally, this protein binds to the 23S rRNA, and is important in its secondary structure. It is located near the subunit interface in the base of the L7/L12 stalk, and near the tRNA binding site of the peptidyltransferase center. This chain is Large ribosomal subunit protein uL6, found in Buchnera aphidicola subsp. Schizaphis graminum (strain Sg).